A 190-amino-acid polypeptide reads, in one-letter code: Peptidyl-tRNA hydrolase (190 aa).

Residue Tyr18 coordinates tRNA. His23 acts as the Proton acceptor in catalysis. Phe67, Asn69, and Asn115 together coordinate tRNA.

The protein belongs to the PTH family. As to quaternary structure, monomer.

It localises to the cytoplasm. It carries out the reaction an N-acyl-L-alpha-aminoacyl-tRNA + H2O = an N-acyl-L-amino acid + a tRNA + H(+). In terms of biological role, hydrolyzes ribosome-free peptidyl-tRNAs (with 1 or more amino acids incorporated), which drop off the ribosome during protein synthesis, or as a result of ribosome stalling. Catalyzes the release of premature peptidyl moieties from peptidyl-tRNA molecules trapped in stalled 50S ribosomal subunits, and thus maintains levels of free tRNAs and 50S ribosomes. The protein is Peptidyl-tRNA hydrolase of Leptospira interrogans serogroup Icterohaemorrhagiae serovar Lai (strain 56601).